Consider the following 1701-residue polypeptide: Merozoite surface protein 1 (1701 aa).

The N-terminal stretch at 1-19 (MKIIFFLCSFLFFIINTQC) is a signal peptide. Residues 89–100 (GSGGSVASGGSG) show a composition bias toward gly residues. The segment at 89–118 (GSGGSVASGGSGNSRRTNPSDNSSDSNTKT) is disordered. Positions 101–116 (NSRRTNPSDNSSDSNT) are enriched in low complexity. Residues Asn110 and Asn239 are each glycosylated (N-linked (GlcNAc...) asparagine). The disordered stretch occupies residues 322-344 (DAENPTTGSKPNPLPENKKKEVE). Asn470, Asn536, and Asn607 each carry an N-linked (GlcNAc...) asparagine glycan. The segment at 704–739 (SETTEDGGHSTHTLSQSGETEVTEETEVTEETVGHT) is disordered. Residues 724–733 (EVTEETEVTE) show a composition bias toward acidic residues. N-linked (GlcNAc...) asparagine glycosylation is found at Asn802, Asn899, Asn919, Asn965, Asn991, Asn1089, and Asn1196. Residues 889-927 (TGTSSTSSPGNTTVNTAQSATHSNSQNQQSNASSTNTQN) show a composition bias toward low complexity. Residues 889-936 (TGTSSTSSPGNTTVNTAQSATHSNSQNQQSNASSTNTQNGVAVSSGPA) are disordered. Disordered regions lie at residues 1231 to 1259 (PPQP…TQIP) and 1451 to 1472 (KEKF…DEQK). A compositionally biased stretch (polar residues) spans 1245–1259 (VSGSSGSTKEETQIP). The segment covering 1456 to 1465 (SSPPTTPPSP) has biased composition (pro residues). N-linked (GlcNAc...) asparagine glycosylation is present at Asn1588. EGF-like domains lie at 1592–1632 (HQCV…VENP) and 1633–1680 (NPTC…IFCS). Disulfide bonds link Cys1594–Cys1605, Cys1599–Cys1615, Cys1617–Cys1628, Cys1636–Cys1649, Cys1643–Cys1663, and Cys1665–Cys1679. The GPI-anchor amidated serine moiety is linked to residue Ser1680. Residues 1681-1701 (SSNFLGISFLLILMLILYSFI) constitute a propeptide, removed in mature form.

As to quaternary structure, forms a complex composed of subunits p83, p30, p38, and p42 which remain non-covalently associated; the complex is formed at the merozoite surface prior to egress from host erythrocytes. Forms a complex composed of processed MSP1 subunits, MSP6 subunit p36 and MSP7; the complex is formed at the merozoite surface prior to egress from host erythrocytes. Within the complex, interacts (via subunit p38) with MSP6 subunit p36 and (via subunits p83, p30 and p38) with MSP7 (via subunit p22). Forms a complex composed of MSP1, MSP6, DBLMSP1 and DBLMSP2. Within the complex, interacts (via subunit p38) with DBLMSP1 and DBLMSP2. Forms a complex composed of MSP1, and rhoptry proteins RhopH3, RAP1 and CLAG9/RhopH3. Within the complex, interacts (via subunits p42 and p19) with RhopH3 (via C-terminus). Forms a complex composed of MSP1, MSP6, MSP7, MSP9 and MSP3; within the complex, MSP6 and MSP9 mediate the binding to the host erythrocyte. Interacts (via subunits p19 and p42) with MSP9; the interaction is direct; MSP1 subunits p19 or p42, and MSP9 form a co-ligand complex that interacts with host SLC4A1/Band 3 protein. May interact with PFD6. Interacts with host spectrin. Interacts with host glycophorin GYPA in a sialic acid-independent manner. In terms of assembly, interacts with host proinflammatory cytokine S100P; the interaction blocks S100P inflammatory and chemotactic activities. As to quaternary structure, interacts with host SLC4A1/Band 3 (via 5ABC region) on the host erythrocyte surface in a sialic acid-independent manner. The p190 precursor is cleaved by SUB1 prior to merozoite egress into 4 subunits p83, p30, p38, and p42 which remain non-covalently associated. SUB1-mediated proteolytic cleavage occurs in an orderly manner; the first cleavage occurs at the p30/p38 site, followed by cleavage at the p83/p30 site, in the 3D7 strain a second cleavage occurs at the N-terminus of p83, the last cleavage occurs at the p38/p42 site. The order of cleavage is essential for parasite viability. SUB1-mediated processing is essential for merozoite egress. In a second processing step during erythrocyte invasion, p42 is cleaved by SUB2 into p33 and p19; the latter remains attached to the merozoite surface via its GPI-anchor and is endocytosed during the subsequent ring stage.

Its subcellular location is the cell membrane. The protein localises to the secreted. The protein resides in the vacuole membrane. During the asexual blood stage, involved in merozoite egress from host erythrocytes possibly via its interaction with the host cytoskeleton protein spectrin resulting in the destabilization of the host cytoskeleton and thus leading to erythrocyte cell membrane rupture. Involved in the binding to host erythrocytes and is required for host erythrocyte invasion. Its function is as follows. By binding to host proinflammatory cytokine S100P may interfere with host immune responses. In terms of biological role, involved in merozoite invasion of host erythrocytes. May play a role in the biogenesis and/or function of the food vacuole during the intraerythrocytic development. This chain is Merozoite surface protein 1, found in Plasmodium falciparum (isolate FC27 / Papua New Guinea).